The primary structure comprises 346 residues: Probable galacturonosyltransferase-like 6 (346 aa).

A helical; Signal-anchor for type II membrane protein transmembrane segment spans residues 1–21; the sequence is MLWITRFAGLFSAAMAVIVLS. Residues 22–346 are Lumenal-facing; the sequence is PSLQSFPPAA…TPYDLYRHSH (325 aa). N-linked (GlcNAc...) asparagine glycosylation occurs at Asn-203.

This sequence belongs to the glycosyltransferase 8 family.

It is found in the golgi apparatus membrane. It functions in the pathway glycan metabolism; pectin biosynthesis. Functionally, may be involved in pectin and/or xylans biosynthesis in cell walls. In Arabidopsis thaliana (Mouse-ear cress), this protein is Probable galacturonosyltransferase-like 6 (GATL6).